The sequence spans 76 residues: uncharacterized protein (76 aa).

2 helical membrane-spanning segments follow: residues 16–33 (FAFT…GAVL) and 45–61 (TMFL…FFCA).

Its subcellular location is the cell membrane. This is an uncharacterized protein from Bacillus subtilis (strain 168).